Reading from the N-terminus, the 510-residue chain is Olfactomedin-4 (510 aa).

The first 20 residues, 1–20 (MRPGLSFLLALLFFLGQAAG), serve as a signal peptide directing secretion. 2 N-linked (GlcNAc...) asparagine glycosylation sites follow: N72 and N136. Residues 155-234 (DFELIKVEVK…ECEASKDQNT (80 aa)) adopt a coiled-coil conformation. The 263-residue stretch at 245-507 (SCGHGGVVNI…LLNYDLSVLQ (263 aa)) folds into the Olfactomedin-like domain. C246 and C437 are oxidised to a cystine. The N-linked (GlcNAc...) asparagine glycan is linked to N253.

In terms of assembly, homomultimer; disulfide-linked. Interacts with NDUFA13. Interacts with cell surface lectins (locutions ricinus communis agglutinin I, concanavalin-A and wheat germ agglutinin) and cadherin. Post-translationally, N-glycosylated. As to expression, expressed during myeloid lineage development. Much higher expression in bone marrow neutrophils than in peripheral blood neutrophils (at protein level). Strongly expressed in the prostate, small intestine and colon and moderately expressed in the bone marrow and stomach. Overexpressed in some pancreatic cancer tissues.

The protein localises to the secreted. Its subcellular location is the extracellular space. The protein resides in the mitochondrion. Its function is as follows. May promote proliferation of pancreatic cancer cells by favoring the transition from the S to G2/M phase. In myeloid leukemic cell lines, inhibits cell growth and induces cell differentiation and apoptosis. May play a role in the inhibition of EIF4EBP1 phosphorylation/deactivation. Facilitates cell adhesion, most probably through interaction with cell surface lectins and cadherin. The chain is Olfactomedin-4 (OLFM4) from Homo sapiens (Human).